The primary structure comprises 394 residues: Elongation factor Tu 1 (394 aa).

One can recognise a tr-type G domain in the interval 9-204 (KPHCNIGTIG…AIDDYIPQPT (196 aa)). The tract at residues 18-25 (GHVDHGKT) is G1. Position 18–25 (18–25 (GHVDHGKT)) interacts with GTP. Thr-25 is a Mg(2+) binding site. Positions 61–65 (GITIQ) are G2. Positions 82–85 (DCPG) are G3. GTP is bound by residues 82–86 (DCPGH) and 137–140 (NKID). Positions 137 to 140 (NKID) are G4. The interval 174–176 (SAL) is G5.

It belongs to the TRAFAC class translation factor GTPase superfamily. Classic translation factor GTPase family. EF-Tu/EF-1A subfamily. Monomer.

The protein resides in the cytoplasm. The catalysed reaction is GTP + H2O = GDP + phosphate + H(+). Its function is as follows. GTP hydrolase that promotes the GTP-dependent binding of aminoacyl-tRNA to the A-site of ribosomes during protein biosynthesis. The sequence is that of Elongation factor Tu 1 from Orientia tsutsugamushi (strain Boryong) (Rickettsia tsutsugamushi).